The primary structure comprises 286 residues: D-tagatose-1,6-bisphosphate aldolase subunit KbaY (286 aa).

The active-site Proton donor is the Asp82. Zn(2+) is bound by residues His83 and His180. Gly181 serves as a coordination point for dihydroxyacetone phosphate. Residue His208 participates in Zn(2+) binding. Residues 209–211 (GAS) and 230–233 (NVAT) each bind dihydroxyacetone phosphate.

The protein belongs to the class II fructose-bisphosphate aldolase family. TagBP aldolase KbaY subfamily. As to quaternary structure, homotetramer. Forms a complex with KbaZ. Zn(2+) is required as a cofactor.

The catalysed reaction is D-tagatofuranose 1,6-bisphosphate = D-glyceraldehyde 3-phosphate + dihydroxyacetone phosphate. Its pathway is carbohydrate metabolism; D-tagatose 6-phosphate degradation; D-glyceraldehyde 3-phosphate and glycerone phosphate from D-tagatose 6-phosphate: step 2/2. Catalytic subunit of the tagatose-1,6-bisphosphate aldolase KbaYZ, which catalyzes the reversible aldol condensation of dihydroxyacetone phosphate (DHAP or glycerone-phosphate) with glyceraldehyde 3-phosphate (G3P) to produce tagatose 1,6-bisphosphate (TBP). Requires KbaZ subunit for full activity and stability. The protein is D-tagatose-1,6-bisphosphate aldolase subunit KbaY of Escherichia coli O127:H6 (strain E2348/69 / EPEC).